The primary structure comprises 175 residues: Protein OPG036 (175 aa).

This sequence belongs to the poxviridae OPG036 family.

Its subcellular location is the host nucleus. Functionally, plays a role in the inhibition of host innate immune response. Within the host nucleus, inhibits activation of interferon-beta promoter by inhibiting IRF3 activation. The protein is Protein OPG036 (OPG036) of Bos taurus (Bovine).